The following is a 488-amino-acid chain: Aspartyl/glutamyl-tRNA(Asn/Gln) amidotransferase subunit B (488 aa).

It belongs to the GatB/GatE family. GatB subfamily. In terms of assembly, heterotrimer of A, B and C subunits.

The enzyme catalyses L-glutamyl-tRNA(Gln) + L-glutamine + ATP + H2O = L-glutaminyl-tRNA(Gln) + L-glutamate + ADP + phosphate + H(+). It catalyses the reaction L-aspartyl-tRNA(Asn) + L-glutamine + ATP + H2O = L-asparaginyl-tRNA(Asn) + L-glutamate + ADP + phosphate + 2 H(+). In terms of biological role, allows the formation of correctly charged Asn-tRNA(Asn) or Gln-tRNA(Gln) through the transamidation of misacylated Asp-tRNA(Asn) or Glu-tRNA(Gln) in organisms which lack either or both of asparaginyl-tRNA or glutaminyl-tRNA synthetases. The reaction takes place in the presence of glutamine and ATP through an activated phospho-Asp-tRNA(Asn) or phospho-Glu-tRNA(Gln). The sequence is that of Aspartyl/glutamyl-tRNA(Asn/Gln) amidotransferase subunit B from Ralstonia pickettii (strain 12J).